We begin with the raw amino-acid sequence, 205 residues long: Holliday junction branch migration complex subunit RuvA (205 aa).

The tract at residues Met-1–Arg-64 is domain I. A domain II region spans residues Ser-65 to Val-143. Positions Ala-144–Gly-152 are flexible linker. A domain III region spans residues Ala-153–Arg-205.

It belongs to the RuvA family. Homotetramer. Forms an RuvA(8)-RuvB(12)-Holliday junction (HJ) complex. HJ DNA is sandwiched between 2 RuvA tetramers; dsDNA enters through RuvA and exits via RuvB. An RuvB hexamer assembles on each DNA strand where it exits the tetramer. Each RuvB hexamer is contacted by two RuvA subunits (via domain III) on 2 adjacent RuvB subunits; this complex drives branch migration. In the full resolvosome a probable DNA-RuvA(4)-RuvB(12)-RuvC(2) complex forms which resolves the HJ.

Its subcellular location is the cytoplasm. The RuvA-RuvB-RuvC complex processes Holliday junction (HJ) DNA during genetic recombination and DNA repair, while the RuvA-RuvB complex plays an important role in the rescue of blocked DNA replication forks via replication fork reversal (RFR). RuvA specifically binds to HJ cruciform DNA, conferring on it an open structure. The RuvB hexamer acts as an ATP-dependent pump, pulling dsDNA into and through the RuvAB complex. HJ branch migration allows RuvC to scan DNA until it finds its consensus sequence, where it cleaves and resolves the cruciform DNA. This is Holliday junction branch migration complex subunit RuvA from Methylobacterium radiotolerans (strain ATCC 27329 / DSM 1819 / JCM 2831 / NBRC 15690 / NCIMB 10815 / 0-1).